The primary structure comprises 276 residues: Sulfur carrier protein FdhD (276 aa).

C122 (cysteine persulfide intermediate) is an active-site residue. Mo-bis(molybdopterin guanine dinucleotide) is bound at residue 259–264; sequence FCKPGK.

Belongs to the FdhD family.

It localises to the cytoplasm. Required for formate dehydrogenase (FDH) activity. Acts as a sulfur carrier protein that transfers sulfur from IscS to the molybdenum cofactor prior to its insertion into FDH. The chain is Sulfur carrier protein FdhD from Photorhabdus laumondii subsp. laumondii (strain DSM 15139 / CIP 105565 / TT01) (Photorhabdus luminescens subsp. laumondii).